Reading from the N-terminus, the 232-residue chain is Enolase-phosphatase E1 (232 aa).

Belongs to the HAD-like hydrolase superfamily. MasA/MtnC family. Monomer. Mg(2+) serves as cofactor.

It catalyses the reaction 5-methylsulfanyl-2,3-dioxopentyl phosphate + H2O = 1,2-dihydroxy-5-(methylsulfanyl)pent-1-en-3-one + phosphate. It participates in amino-acid biosynthesis; L-methionine biosynthesis via salvage pathway; L-methionine from S-methyl-5-thio-alpha-D-ribose 1-phosphate: step 3/6. It functions in the pathway amino-acid biosynthesis; L-methionine biosynthesis via salvage pathway; L-methionine from S-methyl-5-thio-alpha-D-ribose 1-phosphate: step 4/6. Its function is as follows. Bifunctional enzyme that catalyzes the enolization of 2,3-diketo-5-methylthiopentyl-1-phosphate (DK-MTP-1-P) into the intermediate 2-hydroxy-3-keto-5-methylthiopentenyl-1-phosphate (HK-MTPenyl-1-P), which is then dephosphorylated to form the acireductone 1,2-dihydroxy-3-keto-5-methylthiopentene (DHK-MTPene). This chain is Enolase-phosphatase E1, found in Xanthomonas campestris pv. campestris (strain 8004).